Reading from the N-terminus, the 256-residue chain is Hydroxyethylthiazole kinase (256 aa).

Met-37 contacts substrate. Residues Lys-113 and Thr-159 each contribute to the ATP site. Gly-186 serves as a coordination point for substrate.

Belongs to the Thz kinase family. Requires Mg(2+) as cofactor.

It catalyses the reaction 5-(2-hydroxyethyl)-4-methylthiazole + ATP = 4-methyl-5-(2-phosphooxyethyl)-thiazole + ADP + H(+). It participates in cofactor biosynthesis; thiamine diphosphate biosynthesis; 4-methyl-5-(2-phosphoethyl)-thiazole from 5-(2-hydroxyethyl)-4-methylthiazole: step 1/1. Catalyzes the phosphorylation of the hydroxyl group of 4-methyl-5-beta-hydroxyethylthiazole (THZ). In Exiguobacterium sibiricum (strain DSM 17290 / CCUG 55495 / CIP 109462 / JCM 13490 / 255-15), this protein is Hydroxyethylthiazole kinase.